Here is a 239-residue protein sequence, read N- to C-terminus: 1-(5-phosphoribosyl)-5-[(5-phosphoribosylamino)methylideneamino] imidazole-4-carboxamide isomerase (239 aa).

Asp12 acts as the Proton acceptor in catalysis. Asp132 serves as the catalytic Proton donor.

The protein belongs to the HisA/HisF family.

Its subcellular location is the cytoplasm. It carries out the reaction 1-(5-phospho-beta-D-ribosyl)-5-[(5-phospho-beta-D-ribosylamino)methylideneamino]imidazole-4-carboxamide = 5-[(5-phospho-1-deoxy-D-ribulos-1-ylimino)methylamino]-1-(5-phospho-beta-D-ribosyl)imidazole-4-carboxamide. Its pathway is amino-acid biosynthesis; L-histidine biosynthesis; L-histidine from 5-phospho-alpha-D-ribose 1-diphosphate: step 4/9. The sequence is that of 1-(5-phosphoribosyl)-5-[(5-phosphoribosylamino)methylideneamino] imidazole-4-carboxamide isomerase from Natronomonas pharaonis (strain ATCC 35678 / DSM 2160 / CIP 103997 / JCM 8858 / NBRC 14720 / NCIMB 2260 / Gabara) (Halobacterium pharaonis).